The sequence spans 435 residues: NADH-quinone oxidoreductase subunit D (435 aa).

It belongs to the complex I 49 kDa subunit family. NDH-1 is composed of 14 different subunits. Subunits NuoB, C, D, E, F, and G constitute the peripheral sector of the complex.

It localises to the cell inner membrane. The catalysed reaction is a quinone + NADH + 5 H(+)(in) = a quinol + NAD(+) + 4 H(+)(out). Functionally, NDH-1 shuttles electrons from NADH, via FMN and iron-sulfur (Fe-S) centers, to quinones in the respiratory chain. The immediate electron acceptor for the enzyme in this species is believed to be ubiquinone. Couples the redox reaction to proton translocation (for every two electrons transferred, four hydrogen ions are translocated across the cytoplasmic membrane), and thus conserves the redox energy in a proton gradient. This is NADH-quinone oxidoreductase subunit D from Xanthomonas euvesicatoria pv. vesicatoria (strain 85-10) (Xanthomonas campestris pv. vesicatoria).